A 323-amino-acid polypeptide reads, in one-letter code: Aldo-keto reductase family 1 member C23-like protein (323 aa).

Position 20–24 (20–24) interacts with NADP(+); it reads GFGTY. A substrate-binding site is contributed by lysine 31. Aspartate 50 serves as a coordination point for NADP(+). Tyrosine 55 serves as the catalytic Proton donor. Histidine 117 contributes to the substrate binding site. NADP(+)-binding positions include 166-167, glutamine 190, 216-222, and 270-280; these read SN, YGALGTQ, and KSYNEKRIKEN.

It belongs to the aldo/keto reductase family. As to quaternary structure, monomer. Detected in endometrium surface epithelium (at protein level). Detected in endometrium.

The protein localises to the cytoplasm. NADP-dependent oxidoreductase involved in steroid metabolism. May act on various hydroxysteroids. This Equus caballus (Horse) protein is Aldo-keto reductase family 1 member C23-like protein (PGFS).